Consider the following 330-residue polypeptide: Basic leucine zipper 2 (330 aa).

The tract at residues 1–207 (MAQLPPKIPT…NRQSAQRSRV (207 aa)) is disordered. Residues 21 to 34 (GHHHHAAHGHHHQR) show a composition bias toward basic residues. Positions 45 to 56 (PLPPFPLPPPAP) are enriched in pro residues. Composition is skewed to low complexity over residues 57–72 (ANGG…QHQP) and 139–151 (QPAA…SSPS). Basic and acidic residues predominate over residues 155 to 166 (SMNDEKQDKGET). The bZIP domain maps to 188–244 (DPKRVKRILANRQSAQRSRVRKLQYISELERSVTSLQTEVSALSPRVAFLDHQRSLL). The basic motif stretch occupies residues 190–209 (KRVKRILANRQSAQRSRVRK). Residues 216–244 (LERSVTSLQTEVSALSPRVAFLDHQRSLL) form a leucine-zipper region. The disordered stretch occupies residues 267-330 (GGTEEGDREA…LVIGRDPDAL (64 aa)).

Expressed in roots, shoots and panicles.

It is found in the nucleus. Transcription regulator. The chain is Basic leucine zipper 2 (BZIP02) from Oryza sativa subsp. japonica (Rice).